The primary structure comprises 159 residues: Transcription repressor OFP6 (159 aa).

Residues proline 39–serine 60 form a disordered region. Over residues serine 51 to serine 60 the composition is skewed to low complexity. An OVATE domain is found at valine 70 to aspartate 129.

Interacts with KNAT1 and KNAT7. In terms of tissue distribution, expressed in roots, shoots, rosette and cauline leaves, stems, flower buds and siliques.

It is found in the nucleus. Functionally, transcriptional repressor that regulates multiple aspects of plant growth and development through the regulation of BEL1-LIKE (BLH) and KNOX TALE (KNAT) homeodomain transcription factors. The protein is Transcription repressor OFP6 (OFP6) of Arabidopsis thaliana (Mouse-ear cress).